Here is a 182-residue protein sequence, read N- to C-terminus: Ribosome-recycling factor (182 aa).

The protein belongs to the RRF family.

It is found in the cytoplasm. Responsible for the release of ribosomes from messenger RNA at the termination of protein biosynthesis. May increase the efficiency of translation by recycling ribosomes from one round of translation to another. The protein is Ribosome-recycling factor of Prochlorococcus marinus (strain MIT 9215).